Reading from the N-terminus, the 303-residue chain is N-acetyl-D-glucosamine kinase (303 aa).

Residues 4–11 (GFDIGGSK) and 133–140 (GVGGGLIV) each bind ATP. Zn(2+) is bound by residues histidine 157, cysteine 177, cysteine 179, and cysteine 184.

This sequence belongs to the ROK (NagC/XylR) family. NagK subfamily.

It carries out the reaction N-acetyl-D-glucosamine + ATP = N-acetyl-D-glucosamine 6-phosphate + ADP + H(+). Its pathway is cell wall biogenesis; peptidoglycan recycling. Its function is as follows. Catalyzes the phosphorylation of N-acetyl-D-glucosamine (GlcNAc) derived from cell-wall degradation, yielding GlcNAc-6-P. This chain is N-acetyl-D-glucosamine kinase, found in Erwinia tasmaniensis (strain DSM 17950 / CFBP 7177 / CIP 109463 / NCPPB 4357 / Et1/99).